A 219-amino-acid polypeptide reads, in one-letter code: ATP-dependent Clp protease proteolytic subunit 1 (219 aa).

The active-site Nucleophile is the Ser113. The active site involves His138.

It belongs to the peptidase S14 family. As to quaternary structure, fourteen ClpP subunits assemble into 2 heptameric rings which stack back to back to give a disk-like structure with a central cavity, resembling the structure of eukaryotic proteasomes.

The protein resides in the cytoplasm. The enzyme catalyses Hydrolysis of proteins to small peptides in the presence of ATP and magnesium. alpha-casein is the usual test substrate. In the absence of ATP, only oligopeptides shorter than five residues are hydrolyzed (such as succinyl-Leu-Tyr-|-NHMec, and Leu-Tyr-Leu-|-Tyr-Trp, in which cleavage of the -Tyr-|-Leu- and -Tyr-|-Trp bonds also occurs).. Functionally, cleaves peptides in various proteins in a process that requires ATP hydrolysis. Has a chymotrypsin-like activity. Plays a major role in the degradation of misfolded proteins. Probably partially responsible for degradation of ECF sigma factor SigR prime. The protein is ATP-dependent Clp protease proteolytic subunit 1 of Streptomyces coelicolor (strain ATCC BAA-471 / A3(2) / M145).